A 220-amino-acid chain; its full sequence is Large ribosomal subunit protein uL3 (220 aa).

Residues 61–81 (KGSKSNKYANKPAEGHAKKAD) are disordered.

Belongs to the universal ribosomal protein uL3 family. In terms of assembly, part of the 50S ribosomal subunit. Forms a cluster with proteins L14 and L19.

Functionally, one of the primary rRNA binding proteins, it binds directly near the 3'-end of the 23S rRNA, where it nucleates assembly of the 50S subunit. This chain is Large ribosomal subunit protein uL3, found in Staphylococcus epidermidis (strain ATCC 35984 / DSM 28319 / BCRC 17069 / CCUG 31568 / BM 3577 / RP62A).